The sequence spans 256 residues: F-actin-capping protein subunit alpha (256 aa).

Serine 31 carries the post-translational modification Phosphoserine.

This sequence belongs to the F-actin-capping protein alpha subunit family. In terms of assembly, component of the F-actin capping complex, composed of a heterodimer of an alpha and a beta subunit.

It localises to the cytoplasm. The protein localises to the cytoskeleton. It is found in the actin patch. Its function is as follows. F-actin-capping proteins bind in a Ca(2+)-independent manner to the fast growing ends of actin filaments (barbed end) thereby blocking the exchange of subunits at these ends. Unlike other capping proteins (such as gelsolin and severin), these proteins do not sever actin filaments. Competes with formin cdc12 for attachment to the actin filaments barbed ends. Slowly replaces cdc12 on the barbed ends in preparation for filament disassembly during contractile ring constriction. In Schizosaccharomyces pombe (strain 972 / ATCC 24843) (Fission yeast), this protein is F-actin-capping protein subunit alpha (acp1).